The sequence spans 57 residues: MAVPKRKMSRSNTRHRRSQWKAAVPTLVSCERCQEPKLQHIACPSCGTYNKRQVLEV.

The protein belongs to the bacterial ribosomal protein bL32 family.

This Streptomyces griseus subsp. griseus (strain JCM 4626 / CBS 651.72 / NBRC 13350 / KCC S-0626 / ISP 5235) protein is Large ribosomal subunit protein bL32.